A 203-amino-acid chain; its full sequence is 5-formyltetrahydrofolate cyclo-ligase (203 aa).

An N-acetylalanine modification is found at alanine 2. ATP-binding positions include 10-14 (KRSLR) and arginine 14. Substrate contacts are provided by residues leucine 56, glutamate 61, and 148–152 (RGKGY). An ATP-binding site is contributed by 145 to 153 (RLGRGKGYY). Mg(2+) is bound by residues aspartate 154 and aspartate 189.

It belongs to the 5-formyltetrahydrofolate cyclo-ligase family. In terms of assembly, monomer. The cofactor is Mg(2+).

It localises to the cytoplasm. It catalyses the reaction (6S)-5-formyl-5,6,7,8-tetrahydrofolate + ATP = (6R)-5,10-methenyltetrahydrofolate + ADP + phosphate. Functionally, contributes to tetrahydrofolate metabolism. Helps regulate carbon flow through the folate-dependent one-carbon metabolic network that supplies carbon for the biosynthesis of purines, thymidine and amino acids. Catalyzes the irreversible conversion of 5-formyltetrahydrofolate (5-FTHF) to yield 5,10-methenyltetrahydrofolate. This Homo sapiens (Human) protein is 5-formyltetrahydrofolate cyclo-ligase (MTHFS).